A 513-amino-acid polypeptide reads, in one-letter code: ATP synthase subunit alpha 2 (513 aa).

169 to 176 contributes to the ATP binding site; sequence GDRQCGKT.

It belongs to the ATPase alpha/beta chains family. F-type ATPases have 2 components, CF(1) - the catalytic core - and CF(0) - the membrane proton channel. CF(1) has five subunits: alpha(3), beta(3), gamma(1), delta(1), epsilon(1). CF(0) has three main subunits: a(1), b(2) and c(9-12). The alpha and beta chains form an alternating ring which encloses part of the gamma chain. CF(1) is attached to CF(0) by a central stalk formed by the gamma and epsilon chains, while a peripheral stalk is formed by the delta and b chains.

The protein resides in the cell inner membrane. It carries out the reaction ATP + H2O + 4 H(+)(in) = ADP + phosphate + 5 H(+)(out). In terms of biological role, produces ATP from ADP in the presence of a proton gradient across the membrane. The alpha chain is a regulatory subunit. The protein is ATP synthase subunit alpha 2 of Paraburkholderia xenovorans (strain LB400).